Here is a 432-residue protein sequence, read N- to C-terminus: MISAAQLLDELMGRDRNLAPDEKRSNVRWDHESVCKYYLCGFCPAELFTNTRSDLGPCEKIHDENLRKQYEKSSRFMKVGYERDFLRYLQSLLAEVERRIRRGHARLALSQNQQSSGAAGPTGKNEEKIQVLTDKIDVLLQQIEELGSEGKVEEAQGMMKLVEQLKEERELLRSTTSTIESFAAQEKQMEVCEVCGAFLIVGDAQSRVDDHLMGKQHMGYAKIKATVEELKEKLRKRTEEPDRDERLKKEKQEREEREKEREREREERERKRRREEEEREKERARDRERRKRSRSRSRHSSRTSDRRCSRSRDHKRSRSRERRRSRSRDRRRSRSHDRSERKHRSRSRDRRRSKSRDRKSYKHRSKSRDREQDRKSKEKEKRGSDDKKSSVKSGSREKQSEDTNTESKESDTKNEVNGTSEDIKSEGDTQSN.

Met1 bears the N-acetylmethionine mark. Residues Ser3, Ser110, and Ser115 each carry the phosphoserine modification. A coiled-coil region spans residues 124-181; that stretch reads KNEEKIQVLTDKIDVLLQQIEELGSEGKVEEAQGMMKLVEQLKEERELLRSTTSTIES. The residue at position 231 (Lys231) is an N6-acetyllysine. Basic and acidic residues predominate over residues 234-287; sequence LRKRTEEPDRDERLKKEKQEREEREKEREREREERERKRRREEEEREKERARDR. The interval 234–432 is disordered; that stretch reads LRKRTEEPDR…IKSEGDTQSN (199 aa). Residues 288 to 301 are compositionally biased toward basic residues; the sequence is ERRKRSRSRSRHSS. Residues 302–311 are compositionally biased toward basic and acidic residues; it reads RTSDRRCSRS. A compositionally biased stretch (basic residues) spans 312–367; it reads RDHKRSRSRERRRSRSRDRRRSRSHDRSERKHRSRSRDRRRSKSRDRKSYKHRSKS. Positions 368–414 are enriched in basic and acidic residues; the sequence is RDREQDRKSKEKEKRGSDDKKSSVKSGSREKQSEDTNTESKESDTKN. The residue at position 420 (Ser420) is a Phosphoserine. Over residues 421–432 the composition is skewed to basic and acidic residues; it reads EDIKSEGDTQSN. Residue Lys424 forms a Glycyl lysine isopeptide (Lys-Gly) (interchain with G-Cter in SUMO1); alternate linkage. A Glycyl lysine isopeptide (Lys-Gly) (interchain with G-Cter in SUMO2); alternate cross-link involves residue Lys424. A phosphoserine mark is found at Ser425 and Ser431.

The protein belongs to the Luc7 family. May interact with SFRS1 and form homodimers. Interacts with JMJD6. Interacts with RBM25. Interacts with RSRC1 (via Arg/Ser-rich domain). Interacts with RRP1B. Phosphorylated in vitro by SRPK1, SRPK2 and CLK1. As to expression, widely expressed. Highest levels in heart, brain, pancreas, thymus, ovary, small intestine and peripheral blood leukocytes, as well as cerebellum, putamen and pituitary gland. Lowest levels in lung, liver and kidney. Also expressed in fetal tissues, including brain, heart, kidney, thymus and lung.

The protein resides in the nucleus speckle. Functionally, binds cAMP regulatory element DNA sequence. May play a role in RNA splicing. The chain is Luc7-like protein 3 (LUC7L3) from Homo sapiens (Human).